Consider the following 514-residue polypeptide: Cardiolipin synthase 2 (514 aa).

Transmembrane regions (helical) follow at residues 7 to 27, 41 to 61, and 71 to 91; these read LIFF…FIDV, ILGI…CVIF, and LTWL…YLLF. PLD phosphodiesterase domains follow at residues 249–276 and 427–454; these read INYR…GDEY and EKGF…DMRS. Catalysis depends on residues H254, K256, D261, H432, K434, and D439.

It belongs to the phospholipase D family. Cardiolipin synthase subfamily.

Its subcellular location is the cell membrane. It catalyses the reaction 2 a 1,2-diacyl-sn-glycero-3-phospho-(1'-sn-glycerol) = a cardiolipin + glycerol. Functionally, catalyzes the reversible phosphatidyl group transfer from one phosphatidylglycerol molecule to another to form cardiolipin (CL) (diphosphatidylglycerol) and glycerol. In Bacillus anthracis, this protein is Cardiolipin synthase 2 (cls2).